We begin with the raw amino-acid sequence, 2025 residues long: E3 ubiquitin-protein ligase TRIP12 (2025 aa).

The segment covering 1–10 (MSNRPNNNPG) has biased composition (polar residues). The interval 1–404 (MSNRPNNNPG…SGESESDDSE (404 aa)) is disordered. At serine 2 the chain carries N-acetylserine. Serine 12 is modified (phosphoserine). The span at 18–27 (RNTAGAQPQD) shows a compositional bias: polar residues. A compositionally biased stretch (basic and acidic residues) spans 48–70 (DPDRANTSERQKTGQVPKKDNSR). A phosphoserine mark is found at serine 77, serine 85, and serine 100. A compositionally biased stretch (polar residues) spans 78-88 (PDYNRTNSPSS). A compositionally biased stretch (polar residues) spans 119–132 (EQQLKSAQLPSTSK). Low complexity-rich tracts occupy residues 154–166 (SSCVKSGSGSEST) and 177–215 (KLASKSATSAKAGCSTITDSSSAASTSSSSSAIASASST). Lysine 181 carries the N6-acetyllysine modification. Positions 280 to 290 (PGSSKSETSKP) are enriched in polar residues. Phosphoserine is present on residues serine 310 and serine 312. The span at 326–338 (QKTTGSCASTSRR) shows a compositional bias: polar residues. The span at 346 to 358 (GAAEARRQEKMAD) shows a compositional bias: basic and acidic residues. The span at 360–371 (ESNQETVNSSAA) shows a compositional bias: polar residues. Low complexity predominate over residues 379-397 (GAAASSSVAGAVGMTTSGE). The WWE domain occupies 755–869 (MLKKGNAQNT…DPELAKSFIK (115 aa)). The segment at 970 to 1077 (ESLLTSPPKA…QSPKSSFLAS (108 aa)) is disordered. Serine 975 carries the post-translational modification Phosphoserine. Over residues 983-1006 (GSGSLGSTTPASSGTATAATNASA) the composition is skewed to low complexity. Residues serine 1024 and serine 1030 each carry the phosphoserine modification. The segment covering 1034–1047 (KRKRLPKRGPRRPK) has biased composition (basic residues). At serine 1049 the chain carries Phosphoserine. The span at 1050-1059 (PPRDDDKVDN) shows a compositional bias: basic and acidic residues. Positions 1062 to 1073 (KSPTTTQSPKSS) are enriched in low complexity. Residues serine 1063, serine 1350, serine 1355, serine 1362, and serine 1409 each carry the phosphoserine modification. Threonine 1410 carries the post-translational modification Phosphothreonine. 2 disordered regions span residues 1441–1466 (TKDCVGGKRGRAQTAPTKTSPRNAKK) and 1601–1620 (TNPEINQSDSQDSRVAPRLD). Lysine 1458 is modified (N6-acetyllysine). A Phosphoserine modification is found at serine 1460. Residues 1529–1603 (EIIPTSEFIN…AMQRLLDTNP (75 aa)) are K-box. Positions 1918-2025 (PDHGYTHDSR…REGQQSFHLS (108 aa)) constitute an HECT domain. The active-site Glycyl thioester intermediate is the cysteine 1992.

It belongs to the UPL family. K-HECT subfamily. As to quaternary structure, interacts with MYC; leading to disrupt interaction with isoform p19ARF/ARF of CDKN2A. Interacts with TRADD; leading to disrupt interaction with isoform p19ARF/ARF of CDKN2A. Interacts with SMARCC1; leading to disrupt interaction with SMARCE1.

It is found in the nucleus. It localises to the nucleoplasm. The enzyme catalyses S-ubiquitinyl-[E2 ubiquitin-conjugating enzyme]-L-cysteine + [acceptor protein]-L-lysine = [E2 ubiquitin-conjugating enzyme]-L-cysteine + N(6)-ubiquitinyl-[acceptor protein]-L-lysine.. It functions in the pathway protein modification; protein ubiquitination. In terms of biological role, E3 ubiquitin-protein ligase involved in ubiquitin fusion degradation (UFD) pathway and regulation of DNA repair. Part of the ubiquitin fusion degradation (UFD) pathway, a process that mediates ubiquitination of protein at their N-terminus, regardless of the presence of lysine residues in target proteins. Acts as a key regulator of DNA damage response by acting as a suppressor of RNF168, an E3 ubiquitin-protein ligase that promotes accumulation of 'Lys-63'-linked histone H2A and H2AX at DNA damage sites, thereby acting as a guard against excessive spreading of ubiquitinated chromatin at damaged chromosomes. In normal cells, mediates ubiquitination and degradation of isoform p19ARF/ARF of CDKN2A, a lysine-less tumor suppressor required for p53/TP53 activation under oncogenic stress. In cancer cells, however, isoform p19ARF/ARF and TRIP12 are located in different cell compartments, preventing isoform p19ARF/ARF ubiquitination and degradation. Does not mediate ubiquitination of isoform p16-INK4a of CDKN2A. Also catalyzes ubiquitination of NAE1 and SMARCE1, leading to their degradation. Ubiquitination and degradation of target proteins is regulated by interaction with proteins such as MYC, TRADD or SMARCC1, which disrupt the interaction between TRIP12 and target proteins. Mediates ubiquitination of ASXL1: following binding to N(6)-methyladenosine methylated DNA, ASXL1 is ubiquitinated by TRIP12, leading to its degradation and subsequent inactivation of the PR-DUB complex. This is E3 ubiquitin-protein ligase TRIP12 (Trip12) from Mus musculus (Mouse).